We begin with the raw amino-acid sequence, 31 residues long: Cytochrome b6-f complex subunit 6 (31 aa).

Residues 4–26 form a helical membrane-spanning segment; sequence ITSYFGFLLAASTITPALLIGLN.

It belongs to the PetL family. The 4 large subunits of the cytochrome b6-f complex are cytochrome b6, subunit IV (17 kDa polypeptide, PetD), cytochrome f and the Rieske protein, while the 4 small subunits are PetG, PetL, PetM and PetN. The complex functions as a dimer.

It is found in the plastid. Its subcellular location is the chloroplast thylakoid membrane. Functionally, component of the cytochrome b6-f complex, which mediates electron transfer between photosystem II (PSII) and photosystem I (PSI), cyclic electron flow around PSI, and state transitions. PetL is important for photoautotrophic growth as well as for electron transfer efficiency and stability of the cytochrome b6-f complex. The sequence is that of Cytochrome b6-f complex subunit 6 from Calycanthus floridus var. glaucus (Eastern sweetshrub).